The primary structure comprises 502 residues: AMP phosphorylase (502 aa).

Residues G168, 195 to 200 (SRAITS), and T204 contribute to the AMP site. Catalysis depends on D257, which acts as the Proton donor. 2 residues coordinate AMP: S265 and K289.

This sequence belongs to the thymidine/pyrimidine-nucleoside phosphorylase family. Type 2 subfamily.

It catalyses the reaction AMP + phosphate = alpha-D-ribose 1,5-bisphosphate + adenine. It carries out the reaction CMP + phosphate = cytosine + alpha-D-ribose 1,5-bisphosphate. The enzyme catalyses UMP + phosphate = alpha-D-ribose 1,5-bisphosphate + uracil. Catalyzes the conversion of AMP and phosphate to adenine and ribose 1,5-bisphosphate (R15P). Exhibits phosphorylase activity toward CMP and UMP in addition to AMP. Functions in an archaeal AMP degradation pathway, together with R15P isomerase and RubisCO. The polypeptide is AMP phosphorylase (Hyperthermus butylicus (strain DSM 5456 / JCM 9403 / PLM1-5)).